We begin with the raw amino-acid sequence, 101 residues long: Apolipoprotein C-II (101 aa).

The N-terminal stretch at 1 to 22 (MGIRYLLVLVLVLLVLGCEVQG) is a signal peptide. The interval 66-74 (TVDEKIREI) is lipid binding. Residues 78–101 (STAAVSTYAGIFTDQLLSMLKGDQ) form a lipoprotein lipase cofactor region.

This sequence belongs to the apolipoprotein C2 family. In terms of processing, proapolipoprotein C-II is synthesized as a sialic acid containing glycoprotein which is subsequently desialylated prior to its proteolytic processing. Proapolipoprotein C-II, the major form found in plasma undergoes proteolytic cleavage of its N-terminal hexapeptide to generate apolipoprotein C-II, which occurs as the minor form in plasma.

It is found in the secreted. Functionally, component of chylomicrons, very low-density lipoproteins (VLDL), low-density lipoproteins (LDL), and high-density lipoproteins (HDL) in plasma. Plays an important role in lipoprotein metabolism as an activator of lipoprotein lipase. Both proapolipoprotein C-II and apolipoprotein C-II can activate lipoprotein lipase. The polypeptide is Apolipoprotein C-II (APOC2) (Mirounga angustirostris (Northern elephant seal)).